Consider the following 147-residue polypeptide: MDLSNLSPAPGSTKARKRLGRGPGSGNGTTAGRGNKGHNSRSGGGVRPGFEGGQMPLHRRLPKRGFVNIFAKDIAVVNIRDLARFESGSVVDGEALKAKGLVKGRVDGIKLLGKGDIAYPLTVKVSHVSRSAREKIEAAGGAIEVIS.

The interval 1–57 is disordered; sequence MDLSNLSPAPGSTKARKRLGRGPGSGNGTTAGRGNKGHNSRSGGGVRPGFEGGQMPL. Composition is skewed to gly residues over residues 21–31 and 42–52; these read RGPGSGNGTTA and SGGGVRPGFEG.

This sequence belongs to the universal ribosomal protein uL15 family. As to quaternary structure, part of the 50S ribosomal subunit.

In terms of biological role, binds to the 23S rRNA. This Desulfosudis oleivorans (strain DSM 6200 / JCM 39069 / Hxd3) (Desulfococcus oleovorans) protein is Large ribosomal subunit protein uL15.